The chain runs to 62 residues: Photosystem II reaction center protein Z (62 aa).

The next 2 membrane-spanning stretches (helical) occupy residues threonine 8 to alanine 28 and phenylalanine 41 to valine 61.

The protein belongs to the PsbZ family. As to quaternary structure, PSII is composed of 1 copy each of membrane proteins PsbA, PsbB, PsbC, PsbD, PsbE, PsbF, PsbH, PsbI, PsbJ, PsbK, PsbL, PsbM, PsbT, PsbY, PsbZ, Psb30/Ycf12, at least 3 peripheral proteins of the oxygen-evolving complex and a large number of cofactors. It forms dimeric complexes.

It localises to the plastid. It is found in the chloroplast thylakoid membrane. In terms of biological role, may control the interaction of photosystem II (PSII) cores with the light-harvesting antenna, regulates electron flow through the 2 photosystem reaction centers. PSII is a light-driven water plastoquinone oxidoreductase, using light energy to abstract electrons from H(2)O, generating a proton gradient subsequently used for ATP formation. The protein is Photosystem II reaction center protein Z of Oltmannsiellopsis viridis (Marine flagellate).